We begin with the raw amino-acid sequence, 584 residues long: Sulfite reductase [NADPH] hemoprotein beta-component (584 aa).

Positions 447, 453, 492, and 496 each coordinate [4Fe-4S] cluster. Siroheme is bound at residue C496.

It belongs to the nitrite and sulfite reductase 4Fe-4S domain family. In terms of assembly, alpha(8)-beta(8). The alpha component is a flavoprotein, the beta component is a hemoprotein. Siroheme serves as cofactor. It depends on [4Fe-4S] cluster as a cofactor.

The catalysed reaction is hydrogen sulfide + 3 NADP(+) + 3 H2O = sulfite + 3 NADPH + 4 H(+). The protein operates within sulfur metabolism; hydrogen sulfide biosynthesis; hydrogen sulfide from sulfite (NADPH route): step 1/1. Component of the sulfite reductase complex that catalyzes the 6-electron reduction of sulfite to sulfide. This is one of several activities required for the biosynthesis of L-cysteine from sulfate. This is Sulfite reductase [NADPH] hemoprotein beta-component from Colwellia psychrerythraea (strain 34H / ATCC BAA-681) (Vibrio psychroerythus).